The following is a 136-amino-acid chain: Histone H3.1 (136 aa).

The segment at 1 to 41 (MARTKQTARKSTGGKAPRKQLATKAARKSAPAAGGVKKPHR) is disordered. K5 is subject to N6,N6,N6-trimethyllysine; alternate. K5 is subject to N6,N6-dimethyllysine; alternate. Residues K5 and K10 each carry the N6-methyllysine; alternate modification. K10 is modified (N6-acetyllysine; alternate). A Phosphoserine modification is found at S11. K15 is modified (N6,N6-dimethyllysine; alternate). N6-acetyllysine; alternate occurs at positions 15, 19, 24, 28, and 37. Residues K19, K24, K28, and K37 each carry the N6-methyllysine; alternate modification. Low complexity predominate over residues 22 to 33 (ATKAARKSAPAA). Residues K28 and K37 each carry the N6,N6,N6-trimethyllysine; alternate modification. N6,N6-dimethyllysine; alternate occurs at positions 28 and 37. N6-acetyllysine occurs at positions 57 and 65. K80 is modified (N6,N6,N6-trimethyllysine; alternate). K80 carries the N6,N6-dimethyllysine; alternate modification. An N6-methyllysine; alternate modification is found at K80.

Belongs to the histone H3 family. In terms of assembly, the nucleosome is a histone octamer containing two molecules each of H2A, H2B, H3 and H4 assembled in one H3-H4 heterotetramer and two H2A-H2B heterodimers. The octamer wraps approximately 147 bp of DNA. In terms of processing, phosphorylated to form H3S10ph. H3S10ph promotes subsequent H3K14ac formation and is required for transcriptional activation through TBP recruitment to the promoters. Post-translationally, mono-, di- and trimethylated by the COMPASS complex to form H3K4me1/2/3. H3K4me activates gene expression by regulating transcription elongation and plays a role in telomere length maintenance. H3K4me enrichment correlates with transcription levels, and occurs in a 5' to 3' gradient with H3K4me3 enrichment at the 5'-end of genes, shifting to H3K4me2 and then H3K4me1. Methylated by SET2 to form H3K36me. H3K36me represses gene expression. Methylated by DOT1 to form H3K79me. H3K79me is required for association of SIR proteins with telomeric regions and for telomeric silencing. The COMPASS-mediated formation of H3K4me2/3 and the DOT1-mediated formation of H3K79me require H2BK123ub1. Acetylation of histone H3 leads to transcriptional activation. H3K14ac formation by GCN5 is promoted by H3S10ph. H3K14ac can also be formed by ESA1. H3K56ac formation occurs predominantly in newly synthesized H3 molecules during G1, S and G2/M of the cell cycle and may be involved in DNA repair.

It localises to the nucleus. The protein resides in the chromosome. Functionally, core component of nucleosome. Nucleosomes wrap and compact DNA into chromatin, limiting DNA accessibility to the cellular machineries which require DNA as a template. Histones thereby play a central role in transcription regulation, DNA repair, DNA replication and chromosomal stability. DNA accessibility is regulated via a complex set of post-translational modifications of histones, also called histone code, and nucleosome remodeling. The sequence is that of Histone H3.1 (HHT1) from Mycosarcoma maydis (Corn smut fungus).